Reading from the N-terminus, the 211-residue chain is Endonuclease Htp3 (211 aa).

Positions 1–20 (MLEVPVWIPILAFAVGLGLG) are cleaved as a signal peptide. The RxLR motif lies at 48–51 (RTLR). Residues 48–198 (RTLRGKVVSV…REKRVNIWSL (151 aa)) form the TNase-like domain. Ca(2+) is bound at residue aspartate 77. Residue arginine 90 is part of the active site. Residue aspartate 95 participates in Ca(2+) binding. Residues glutamate 98 and arginine 138 contribute to the active site. Asparagine 153 carries N-linked (GlcNAc...) asparagine glycosylation. Positions 200-211 (KRETPAQYKARK) are binding to the host cell surface.

This sequence in the N-terminal section; belongs to the RxLR effector family. In the C-terminal section; belongs to the LCL3 family. In terms of assembly, interacts with the host cell surface endoplasmin gp96, in order to get translocated into to host cell. Interacts with the effector Htp1, in order to get released from vesicles into the host cytosol.

It localises to the secreted. Its subcellular location is the host cytoplasm. It is found in the host cytosol. The nuclease activity shows a general salt dependency with a clear reduction by magnesium and sulfate ions. Its function is as follows. Effector involved in the disease saprolegniosis in salmonids and other freshwater fish, resulting in considerable economic losses in aquaculture. Within the host fish cells, Htp3 is released from vesicles into host cytosol where it degrades nucleic acids. This chain is Endonuclease Htp3 (HTP3), found in Saprolegnia parasitica (strain CBS 223.65).